Consider the following 424-residue polypeptide: MIKLGVIADDFTGATDIASFLVNNGLPTVQLNGVPPSDFKVDTQAVVISLKSRSCSAEQAVADSLNALAWLQQQGCQQFYFKYCSTFDSTAKGNIGPVTDALLEQLGETQTIISPALPVNGRTVYQGHLFVMDQLLSESGMRHHPVTPMTDSNLMRVMEQQAAGQCGLVPYAVMDQGADAVKQRLAQLKEQGMRYVVLDTLNEQHLLTQGEALRDMKLVTGGSGLAIGLARQWADSTKQTSSATEAGKPQSGAGVVLSGSCSVMTNKQVAHYLKQAAGRAIDVARCLESDDAQQSYAQELADWVKAHRDDALAPLLYATSSPDELAQIQQRWGAEASSHAVEKLFAAVARQLQEDGFQRFIIAGGETSSIVVQTLGIHAFHIGPSISPGVPWVRSTTHPLSLALKSGNFGDEDFFARAQKEFAA.

Residues serine 260, 364 to 367 (GGET), and glycine 407 each bind ATP.

Belongs to the four-carbon acid sugar kinase family.

It carries out the reaction 3-dehydro-L-erythronate + ATP = 3-dehydro-4-O-phospho-L-erythronate + ADP + H(+). The enzyme catalyses 3-dehydro-D-erythronate + ATP = 3-dehydro-4-O-phospho-D-erythronate + ADP + H(+). Functionally, catalyzes the ATP-dependent phosphorylation of 3-oxo-tetronate to 3-oxo-tetronate 4-phosphate. This is 3-oxo-tetronate kinase from Pectobacterium atrosepticum (strain SCRI 1043 / ATCC BAA-672) (Erwinia carotovora subsp. atroseptica).